We begin with the raw amino-acid sequence, 437 residues long: MAAGTLYTYPENWRAFKALIAAQYSGAQIRVLSAPPHFHFGQTNRTPEFLRKFPAGKVPAFEGDDGFCVFESNAIAYYVSNEELRGSTPEAAAQVVQWVSFADSDIVPPASTWVFPTLGIMHHNKQATENAKEEVKRILGLLDTHLKTRTFLVGERVTLADITVVCTLLWLYKQVLEPSFRQAFPNTNRWFLTCINQPQFRAILGEVKLCEKMAQFDAKKFAESQPKKDTPRKEKGSREEKQKPQTERKEEKKAAAPAPEEEMDECEQALAAEPKAKDPFAHLPKSTFVLDEFKRKYSNEDTLSVALPYFWEHFDKDGWSLWYAEYRFPEELTQTFMSCNLITGMFQRLDKLRKNAFASVILFGTNNSSSISGVWVFRGQDLAFPLSPDWQVDYESYTWRKLDPGSEETQTLVREYFSWEGAFQHVGKAVNQGKIFK.

Ala2 is modified (N-acetylalanine). The region spanning 2-87 (AAGTLYTYPE…YVSNEELRGS (86 aa)) is the GST N-terminal domain. The GST C-terminal domain maps to 88-216 (TPEAAAQVVQ…VKLCEKMAQF (129 aa)). An N6-acetyllysine mark is found at Lys147 and Lys212. Basic and acidic residues predominate over residues 221–254 (FAESQPKKDTPRKEKGSREEKQKPQTERKEEKKA). Positions 221 to 268 (FAESQPKKDTPRKEKGSREEKQKPQTERKEEKKAAAPAPEEEMDECEQ) are disordered. Lys253 participates in a covalent cross-link: Glycyl lysine isopeptide (Lys-Gly) (interchain with G-Cter in SUMO1). The EF-1-gamma C-terminal domain occupies 276 to 437 (AKDPFAHLPK…KAVNQGKIFK (162 aa)). Lys285 is covalently cross-linked (Glycyl lysine isopeptide (Lys-Gly) (interchain with G-Cter in SUMO2)). Residue Lys401 is modified to N6-acetyllysine. Lys434 carries the N6-acetyllysine; alternate modification. The residue at position 434 (Lys434) is an N6-malonyllysine; alternate.

In terms of assembly, EF-1 is composed of four subunits: alpha, beta, delta, and gamma.

In terms of biological role, probably plays a role in anchoring the complex to other cellular components. This chain is Elongation factor 1-gamma (Eef1g), found in Rattus norvegicus (Rat).